The primary structure comprises 197 residues: Casparian strip membrane protein 4 (197 aa).

The Cytoplasmic segment spans residues 1–34; that stretch reads MMSSTTIDVPAESSNVAKGKAVLVAAPRPGGWKK. The helical transmembrane segment at 35 to 55 threads the bilayer; the sequence is GIAIVDFVLRLGAVAAALGAA. The Extracellular segment spans residues 56 to 85; the sequence is TTMATADQTLPFFTQFFQFEASYDSFTTFQ. A helical membrane pass occupies residues 86 to 106; the sequence is FFVITMALVGCYLVLSLPLSI. The Cytoplasmic segment spans residues 107–118; sequence VSIIRPHALGPK. Residues 119 to 139 traverse the membrane as a helical segment; that stretch reads LFLIILDTVFLTLATASAASA. Residues 140–171 lie on the Extracellular side of the membrane; the sequence is AAVVYVAHNGNQDSNWLAICNQFGDFCAQTSG. A helical transmembrane segment spans residues 172–192; the sequence is AVVSSLVAVVVFVLLIVMSAL. Topologically, residues 193 to 197 are cytoplasmic; it reads ALGKH.

Belongs to the Casparian strip membrane proteins (CASP) family. Homodimer and heterodimers.

The protein localises to the cell membrane. Regulates membrane-cell wall junctions and localized cell wall deposition. Required for establishment of the Casparian strip membrane domain (CSD) and the subsequent formation of Casparian strips, a cell wall modification of the root endodermis that determines an apoplastic barrier between the intraorganismal apoplasm and the extraorganismal apoplasm and prevents lateral diffusion. The sequence is that of Casparian strip membrane protein 4 from Lotus japonicus (Lotus corniculatus var. japonicus).